The sequence spans 166 residues: Putative 4-hydroxy-4-methyl-2-oxoglutarate aldolase (166 aa).

Substrate-binding positions include 74–77 (GDQI) and arginine 96. Aspartate 97 is a binding site for a divalent metal cation.

It belongs to the class II aldolase/RraA-like family. Homotrimer. It depends on a divalent metal cation as a cofactor.

The catalysed reaction is 4-hydroxy-4-methyl-2-oxoglutarate = 2 pyruvate. It carries out the reaction oxaloacetate + H(+) = pyruvate + CO2. Its function is as follows. Catalyzes the aldol cleavage of 4-hydroxy-4-methyl-2-oxoglutarate (HMG) into 2 molecules of pyruvate. Also contains a secondary oxaloacetate (OAA) decarboxylase activity due to the common pyruvate enolate transition state formed following C-C bond cleavage in the retro-aldol and decarboxylation reactions. This chain is Putative 4-hydroxy-4-methyl-2-oxoglutarate aldolase, found in Xanthomonas axonopodis pv. citri (strain 306).